The chain runs to 204 residues: Glycerol-3-phosphate acyltransferase (204 aa).

The next 5 membrane-spanning stretches (helical) occupy residues 8 to 28, 53 to 73, 81 to 101, 116 to 136, and 155 to 175; these read ILIFAYLLGSINSAIIVCYIF, VPAAITLIFDILKGLVPVVIA, FITACTALYAILGHIFPIFFG, FGFSWILGLIFVITWLCVAII, and VIFTSDLQVAAPFLIIAIIIL.

Belongs to the PlsY family. As to quaternary structure, probably interacts with PlsX.

The protein localises to the cell inner membrane. The catalysed reaction is an acyl phosphate + sn-glycerol 3-phosphate = a 1-acyl-sn-glycero-3-phosphate + phosphate. The protein operates within lipid metabolism; phospholipid metabolism. Catalyzes the transfer of an acyl group from acyl-phosphate (acyl-PO(4)) to glycerol-3-phosphate (G3P) to form lysophosphatidic acid (LPA). This enzyme utilizes acyl-phosphate as fatty acyl donor, but not acyl-CoA or acyl-ACP. This Francisella tularensis subsp. mediasiatica (strain FSC147) protein is Glycerol-3-phosphate acyltransferase.